The chain runs to 586 residues: Phosphomethylpyrimidine synthase (586 aa).

Residues 1–59 (MKQSVSAEQIELKSSLPGSKKVYVDGPREGMKVPMREIEQSDTNGVPNPPIRVYDTSGP) form a disordered region. Residues 22-39 (VYVDGPREGMKVPMREIE) show a composition bias toward basic and acidic residues. Substrate is bound by residues asparagine 193, methionine 222, tyrosine 251, histidine 287, 307-309 (SRG), 348-351 (DGLR), and glutamate 387. Histidine 391 lines the Zn(2+) pocket. Residue tyrosine 414 participates in substrate binding. Residue histidine 455 participates in Zn(2+) binding. 3 residues coordinate [4Fe-4S] cluster: cysteine 535, cysteine 538, and cysteine 543.

It belongs to the ThiC family. [4Fe-4S] cluster serves as cofactor.

The enzyme catalyses 5-amino-1-(5-phospho-beta-D-ribosyl)imidazole + S-adenosyl-L-methionine = 4-amino-2-methyl-5-(phosphooxymethyl)pyrimidine + CO + 5'-deoxyadenosine + formate + L-methionine + 3 H(+). The protein operates within cofactor biosynthesis; thiamine diphosphate biosynthesis. Catalyzes the synthesis of the hydroxymethylpyrimidine phosphate (HMP-P) moiety of thiamine from aminoimidazole ribotide (AIR) in a radical S-adenosyl-L-methionine (SAM)-dependent reaction. In Bacillus cereus (strain ZK / E33L), this protein is Phosphomethylpyrimidine synthase.